We begin with the raw amino-acid sequence, 44 residues long: Photosystem I reaction center subunit IX (44 aa).

A helical transmembrane segment spans residues 7 to 27 (YLSVAPVLSTLWFGALAGLLI).

Belongs to the PsaJ family.

It localises to the plastid. It is found in the chloroplast thylakoid membrane. May help in the organization of the PsaE and PsaF subunits. This is Photosystem I reaction center subunit IX from Coffea arabica (Arabian coffee).